We begin with the raw amino-acid sequence, 264 residues long: Phosphatidylglycerol--prolipoprotein diacylglyceryl transferase (264 aa).

4 helical membrane passes run Leu17–Gly37, Leu57–Tyr77, Ile89–Val109, and Gly118–Ala138. Arg140 is an a 1,2-diacyl-sn-glycero-3-phospho-(1'-sn-glycerol) binding site. The next 3 membrane-spanning stretches (helical) occupy residues Pro173–Phe193, Gly201–Thr221, and Met237–Ala257.

Belongs to the Lgt family.

It localises to the cell inner membrane. It carries out the reaction L-cysteinyl-[prolipoprotein] + a 1,2-diacyl-sn-glycero-3-phospho-(1'-sn-glycerol) = an S-1,2-diacyl-sn-glyceryl-L-cysteinyl-[prolipoprotein] + sn-glycerol 1-phosphate + H(+). It functions in the pathway protein modification; lipoprotein biosynthesis (diacylglyceryl transfer). Functionally, catalyzes the transfer of the diacylglyceryl group from phosphatidylglycerol to the sulfhydryl group of the N-terminal cysteine of a prolipoprotein, the first step in the formation of mature lipoproteins. In Bordetella avium (strain 197N), this protein is Phosphatidylglycerol--prolipoprotein diacylglyceryl transferase.